A 528-amino-acid polypeptide reads, in one-letter code: Intestinal-type alkaline phosphatase (528 aa).

A signal peptide spans 1-19; the sequence is MQGPWVLLLLGLRLQLSLG. Aspartate 61 contacts Mg(2+). Zn(2+) is bound by residues aspartate 61 and serine 111. Catalysis depends on serine 111, which acts as the Phosphoserine intermediate. The cysteines at positions 140 and 202 are disulfide-linked. Asparagine 141 carries N-linked (GlcNAc...) asparagine glycosylation. Serine 174 provides a ligand contact to Mg(2+). Glutamate 235 lines the Ca(2+) pocket. A glycan (N-linked (GlcNAc...) asparagine) is linked at asparagine 268. Ca(2+) contacts are provided by phenylalanine 288, glutamate 289, and aspartate 304. Glutamate 330 serves as a coordination point for Mg(2+). Zn(2+) contacts are provided by aspartate 335, histidine 339, aspartate 376, and histidine 377. Asparagine 429 is a glycosylation site (N-linked (GlcNAc...) asparagine). Histidine 451 is a binding site for Zn(2+). Cysteine 486 and cysteine 493 are joined by a disulfide. A lipid anchor (GPI-anchor amidated aspartate) is attached at aspartate 503. A propeptide spans 504–528 (removed in mature form); that stretch reads AAHPVAASLPLLAGTLLLLGASAAP.

It belongs to the alkaline phosphatase family. Homodimer. The cofactor is Mg(2+). Requires Zn(2+) as cofactor. Ca(2+) serves as cofactor.

The protein resides in the cell membrane. It catalyses the reaction a phosphate monoester + H2O = an alcohol + phosphate. In terms of biological role, alkaline phosphatase that can hydrolyze various phosphate compounds. The polypeptide is Intestinal-type alkaline phosphatase (ALPI) (Homo sapiens (Human)).